A 244-amino-acid chain; its full sequence is Salivary gland SP38-40.A protein (244 aa).

The N-terminal stretch at 1 to 21 (MRIKFLVVLAVICLFAHYASA) is a signal peptide. Disordered stretches follow at residues 23–91 (GMGG…EKKQ), 137–169 (PPPG…LRKE), and 206–244 (VQGK…DAKK). Basic and acidic residues-rich tracts occupy residues 26 to 86 (GDKK…EVKK) and 157 to 169 (PPKE…LRKE). 2 repeat units span residues 29-34 (KPKDAP) and 35-40 (KPKDAP). Residues 29 to 47 (KPKDAPKPKDAPKPKEVKP) are 3 X 6 AA approximate tandem repeats of K-P-K-D-A-P. The 1-3; approximate repeat unit spans residues 41-47 (KPKEVKP). 2 tandem repeats follow at residues 156–159 (KPPK) and 161–164 (KPPK). Positions 156 to 168 (KPPKEKPPKKLRK) are 3 X 4 AA approximate tandem repeats of K-P-P-K. Residues 165–168 (KLRK) form a 2-3; approximate repeat. Residues 209–224 (KQKKGAKKAKGGKKAA) are compositionally biased toward basic residues. Repeat copies occupy residues 225-228 (PKPG), 229-232 (PKPG), and 233-236 (PKQA). A 4 X 4 AA approximate tandem repeats of P-K-[PQ]-[GA] region spans residues 225-240 (PKPGPKPGPKQADKPK). A compositionally biased stretch (basic and acidic residues) spans 235–244 (QADKPKDAKK). The stretch at 237-240 (DKPK) is one 3-4; approximate repeat.

As to expression, salivary gland.

It localises to the secreted. Its function is as follows. Used by the larvae to construct a supramolecular structure, the larval tube. The protein is Salivary gland SP38-40.A protein (SP38-40.A) of Chironomus tentans (Midge).